Reading from the N-terminus, the 517-residue chain is Crotonobetaine/carnitine--CoA ligase (517 aa).

The protein belongs to the ATP-dependent AMP-binding enzyme family.

It carries out the reaction 4-(trimethylamino)butanoate + ATP + CoA = 4-(trimethylamino)butanoyl-CoA + AMP + diphosphate. The enzyme catalyses crotonobetaine + ATP + CoA = crotonobetainyl-CoA + AMP + diphosphate. The catalysed reaction is (R)-carnitine + ATP + CoA = (R)-carnitinyl-CoA + AMP + diphosphate. It participates in amine and polyamine metabolism; carnitine metabolism. Catalyzes the transfer of CoA to carnitine, generating the initial carnitinyl-CoA needed for the CaiB reaction cycle. Also has activity toward crotonobetaine and gamma-butyrobetaine. This Salmonella enteritidis PT4 (strain P125109) protein is Crotonobetaine/carnitine--CoA ligase.